We begin with the raw amino-acid sequence, 147 residues long: Mineralocorticoid receptor (147 aa).

One can recognise an NR LBD domain in the interval 1-147; it reads FALSWRSYKH…SQALKVEFPA (147 aa). 21-hydroxyprogesterone-binding residues include Arg-6 and Thr-134. 2 residues coordinate aldosterone: Arg-6 and Thr-134. 2 residues coordinate progesterone: Arg-6 and Thr-134.

It belongs to the nuclear hormone receptor family. NR3 subfamily.

The protein localises to the cytoplasm. Its subcellular location is the nucleus. Receptor for both mineralocorticoids (MC) such as aldosterone and glucocorticoids (GC) such as corticosterone or cortisol. Binds to mineralocorticoid response elements (MRE) and transactivates target genes. The effect of MC is to increase ion and water transport and thus raise extracellular fluid volume and blood pressure and lower potassium levels. This chain is Mineralocorticoid receptor (NR3C2), found in Gallus gallus (Chicken).